Here is an 804-residue protein sequence, read N- to C-terminus: Phenylalanine--tRNA ligase beta subunit (804 aa).

In terms of domain architecture, tRNA-binding spans 40–155; the sequence is GEGIKGVVIG…GDAETGADAL (116 aa). Residues 409–484 enclose the B5 domain; that stretch reads IKENVIRLSV…RLYGYDNIPS (76 aa). Residues aspartate 462, aspartate 468, glutamate 471, and glutamate 472 each coordinate Mg(2+). The FDX-ACB domain occupies 710 to 803; the sequence is PKYPSVTRDI…LEDKYQAVLR (94 aa).

This sequence belongs to the phenylalanyl-tRNA synthetase beta subunit family. Type 1 subfamily. Tetramer of two alpha and two beta subunits. Requires Mg(2+) as cofactor.

The protein resides in the cytoplasm. It catalyses the reaction tRNA(Phe) + L-phenylalanine + ATP = L-phenylalanyl-tRNA(Phe) + AMP + diphosphate + H(+). The polypeptide is Phenylalanine--tRNA ligase beta subunit (Bacillus licheniformis (strain ATCC 14580 / DSM 13 / JCM 2505 / CCUG 7422 / NBRC 12200 / NCIMB 9375 / NCTC 10341 / NRRL NRS-1264 / Gibson 46)).